The sequence spans 1915 residues: Methylcytosine dioxygenase tet3-B (1915 aa).

The interval 28–49 (RLRVSEMPSELNGGGDGSKGDG) is disordered. The CXXC-type zinc-finger motif lies at 61 to 102 (SNKKRKRCGVCVPCLRKEPCGTCYNCVNRSTSHQICKMRKCE). 8 residues coordinate Zn(2+): Cys-68, Cys-71, Cys-74, Cys-80, Cys-83, Cys-86, Cys-96, and Cys-101. Residues 629 to 638 (PNSQQAPVSK) show a composition bias toward polar residues. 3 disordered regions span residues 629–679 (PNSQ…RVKE), 776–806 (GRCP…VPGQ), and 831–880 (FSLP…LSNN). The span at 664-676 (KPPRKQVQIKKPR) shows a compositional bias: basic residues. A compositionally biased stretch (low complexity) spans 779–793 (PTPSTGDSSSGQGDS). 2 stretches are compositionally biased toward polar residues: residues 838–854 (VPSQ…TSGV) and 864–880 (QLPS…LSNN). Residues Cys-974, Cys-976, Cys-1034, His-1060, and Cys-1062 each coordinate Zn(2+). Arg-1102 is a binding site for 2-oxoglutarate. Residues Cys-1112, Cys-1114, Cys-1130, Cys-1139, and Cys-1199 each contribute to the Zn(2+) site. Cys-1215 is a 2-oxoglutarate binding site. His-1221 lines the Zn(2+) pocket. Fe cation is bound by residues His-1223 and Asp-1225. His-1257 lines the 2-oxoglutarate pocket. 3 disordered regions span residues 1298–1356 (LSEP…QTKP), 1469–1516 (GMNQ…APME), and 1719–1753 (PAVN…VKEE). Positions 1308–1339 (RQLDAKKATAEKKKLQKEKLVSPDKTKQEPSD) are enriched in basic and acidic residues. A compositionally biased stretch (polar residues) spans 1340–1355 (TKTCQQNPGVPQQQTK). A compositionally biased stretch (basic and acidic residues) spans 1482-1491 (NYRRSSEVPH). Composition is skewed to polar residues over residues 1494-1503 (SLQNSNSQKS) and 1720-1732 (AVNS…SQNH). His-1794 serves as a coordination point for Fe cation. A 2-oxoglutarate-binding site is contributed by 1809-1811 (RIS). Residues 1827-1860 (LALWEAKMKQLAERARVKEEEAAKLGIKQEVKSL) adopt a coiled-coil conformation.

This sequence belongs to the TET family. It depends on Fe(2+) as a cofactor. The cofactor is Zn(2+). As to expression, detected in embryo (at protein level). Detected in embryonic head, in developing brain and eye.

The protein localises to the nucleus. It is found in the chromosome. The catalysed reaction is a 5-methyl-2'-deoxycytidine in DNA + 2-oxoglutarate + O2 = a 5-hydroxymethyl-2'-deoxycytidine in DNA + succinate + CO2. The enzyme catalyses a 5-hydroxymethyl-2'-deoxycytidine in DNA + 2-oxoglutarate + O2 = a 5-formyl-2'-deoxycytidine in DNA + succinate + CO2 + H2O. It catalyses the reaction a 5-formyl-2'-deoxycytidine in DNA + 2-oxoglutarate + O2 = a 5-carboxyl-2'-deoxycytidine in DNA + succinate + CO2 + H(+). Its function is as follows. Dioxygenase that catalyzes the conversion of the modified genomic base 5-methylcytosine (5mC) into 5-hydroxymethylcytosine (5hmC) and plays a key role in epigenetic chromatin reprogramming during embryonic development. Conversion of 5mC into 5hmC probably constitutes the first step in cytosine demethylation. Selectively binds to the promoter region of target genes and contributes to regulate the expression of numerous developmental genes, including pax6, rax, sox9 and six3. May also contribute to the regulation of target genes in ways that do not require its enzyme activity. In Xenopus laevis (African clawed frog), this protein is Methylcytosine dioxygenase tet3-B.